We begin with the raw amino-acid sequence, 378 residues long: Queuine tRNA-ribosyltransferase (378 aa).

Residue aspartate 91 is the Proton acceptor of the active site. Residues 91 to 95, aspartate 145, glutamine 189, and glycine 216 each bind substrate; that span reads DSGGF. The RNA binding stretch occupies residues 247–253; it reads GVGKPED. Aspartate 266 serves as the catalytic Nucleophile. Positions 271-275 are RNA binding; important for wobble base 34 recognition; the sequence is TRNAR. Zn(2+) contacts are provided by cysteine 304, cysteine 306, cysteine 309, and histidine 335.

The protein belongs to the queuine tRNA-ribosyltransferase family. In terms of assembly, homodimer. Within each dimer, one monomer is responsible for RNA recognition and catalysis, while the other monomer binds to the replacement base PreQ1. Requires Zn(2+) as cofactor.

The catalysed reaction is 7-aminomethyl-7-carbaguanine + guanosine(34) in tRNA = 7-aminomethyl-7-carbaguanosine(34) in tRNA + guanine. It participates in tRNA modification; tRNA-queuosine biosynthesis. In terms of biological role, catalyzes the base-exchange of a guanine (G) residue with the queuine precursor 7-aminomethyl-7-deazaguanine (PreQ1) at position 34 (anticodon wobble position) in tRNAs with GU(N) anticodons (tRNA-Asp, -Asn, -His and -Tyr). Catalysis occurs through a double-displacement mechanism. The nucleophile active site attacks the C1' of nucleotide 34 to detach the guanine base from the RNA, forming a covalent enzyme-RNA intermediate. The proton acceptor active site deprotonates the incoming PreQ1, allowing a nucleophilic attack on the C1' of the ribose to form the product. After dissociation, two additional enzymatic reactions on the tRNA convert PreQ1 to queuine (Q), resulting in the hypermodified nucleoside queuosine (7-(((4,5-cis-dihydroxy-2-cyclopenten-1-yl)amino)methyl)-7-deazaguanosine). The sequence is that of Queuine tRNA-ribosyltransferase from Vibrio campbellii (strain ATCC BAA-1116).